We begin with the raw amino-acid sequence, 297 residues long: Glucose-6-phosphate 1-epimerase (297 aa).

The substrate site is built by Arg-57, Gln-81, and Arg-86. Ser-88 bears the Phosphoserine mark. Residue His-159 is part of the active site. Position 203 (Asp-203) interacts with substrate. The active site involves Glu-264.

It belongs to the glucose-6-phosphate 1-epimerase family.

It carries out the reaction alpha-D-glucose 6-phosphate = beta-D-glucose 6-phosphate. In terms of biological role, catalyzes the interconversion between the alpha and beta anomers from at least three hexose 6-phosphate sugars (Glc6P, Gal6P, and Man6P). The polypeptide is Glucose-6-phosphate 1-epimerase (Saccharomyces cerevisiae (strain ATCC 204508 / S288c) (Baker's yeast)).